A 223-amino-acid chain; its full sequence is Small ribosomal subunit protein uS3 (223 aa).

Residues 39–107 (VREFLHKKLA…PVQINIEEVR (69 aa)) form the KH type-2 domain.

Belongs to the universal ribosomal protein uS3 family. In terms of assembly, part of the 30S ribosomal subunit. Forms a tight complex with proteins S10 and S14.

Binds the lower part of the 30S subunit head. Binds mRNA in the 70S ribosome, positioning it for translation. This is Small ribosomal subunit protein uS3 from Francisella tularensis subsp. novicida (strain U112).